The following is a 163-amino-acid chain: MALNLQDKQAIVAEVNEAAKGALSAVVADSRGVTVEKMTELRKSAREAGVTMRVVRNTLLRRAVEGTEFECLTDTFTGPTLIAFSNEHPGAAARLFTEFAKTNKEFELKGAAFEGKVQNVEFLATLPTYEEAIARLMGTMKEAAAGKLVRTFAALRDKLQEAA.

This sequence belongs to the universal ribosomal protein uL10 family. In terms of assembly, part of the ribosomal stalk of the 50S ribosomal subunit. The N-terminus interacts with L11 and the large rRNA to form the base of the stalk. The C-terminus forms an elongated spine to which L12 dimers bind in a sequential fashion forming a multimeric L10(L12)X complex.

Functionally, forms part of the ribosomal stalk, playing a central role in the interaction of the ribosome with GTP-bound translation factors. This is Large ribosomal subunit protein uL10 from Haemophilus ducreyi (strain 35000HP / ATCC 700724).